We begin with the raw amino-acid sequence, 570 residues long: Periplasmic trehalase (570 aa).

A signal peptide spans 1 to 34 (MITPALRHSGTLSFAIKLTVASTLLTFASLSAHA). Residues arginine 157, 164–165 (WD), asparagine 201, 210–212 (RSQ), 282–284 (RPE), and glycine 315 each bind substrate. Catalysis depends on proton donor/acceptor residues aspartate 317 and glutamate 501. Substrate is bound at residue glutamate 516. The interval 542-570 (KPCDSVPATRPAAPGASQPAPQKQVETTP) is disordered. Over residues 552-570 (PAAPGASQPAPQKQVETTP) the composition is skewed to low complexity.

The protein belongs to the glycosyl hydrolase 37 family. As to quaternary structure, monomer.

It is found in the periplasm. The catalysed reaction is alpha,alpha-trehalose + H2O = alpha-D-glucose + beta-D-glucose. Its function is as follows. Provides the cells with the ability to utilize trehalose at high osmolarity by splitting it into glucose molecules that can subsequently be taken up by the phosphotransferase-mediated uptake system. The polypeptide is Periplasmic trehalase (Citrobacter koseri (strain ATCC BAA-895 / CDC 4225-83 / SGSC4696)).